The primary structure comprises 206 residues: Cytochrome c biogenesis ATP-binding export protein CcmA (206 aa).

One can recognise an ABC transporter domain in the interval 4–205; the sequence is LEGIDLTCIR…AGAAIQRLQL (202 aa). 36-43 serves as a coordination point for ATP; sequence GPNGSGKT.

The protein belongs to the ABC transporter superfamily. CcmA exporter (TC 3.A.1.107) family. The complex is composed of two ATP-binding proteins (CcmA) and two transmembrane proteins (CcmB).

It localises to the cell inner membrane. The enzyme catalyses heme b(in) + ATP + H2O = heme b(out) + ADP + phosphate + H(+). Its function is as follows. Part of the ABC transporter complex CcmAB involved in the biogenesis of c-type cytochromes; once thought to export heme, this seems not to be the case, but its exact role is uncertain. Responsible for energy coupling to the transport system. This is Cytochrome c biogenesis ATP-binding export protein CcmA from Nitrosospira multiformis (strain ATCC 25196 / NCIMB 11849 / C 71).